We begin with the raw amino-acid sequence, 148 residues long: U5-hexatoxin-Hi1a (148 aa).

An N-terminal signal peptide occupies residues 1 to 21 (MNFSVVAVALVVVLTVHFTDG). The propeptide occupies 22 to 38 (QETSSSLPSPPSPLPGR). A disordered region spans residues 125–148 (TPSTTVTTPTPTTETPTTETPSTP).

Post-translationally, contains 2 disulfide bonds. As to expression, expressed by the venom gland.

It localises to the secreted. Its function is as follows. Probable ion channel inhibitor. This is U5-hexatoxin-Hi1a from Hadronyche infensa (Fraser island funnel-web spider).